A 457-amino-acid chain; its full sequence is MITREFDTIAAISTPLGEGAIGIVRLSGTDSFAIAQKIFKGKDLNKVASHTLNYGHIIDPLTGKVMDEVMVGAMKSPKTFTREDIIEINTHGGIAVTNEILQLAIREGARLAEPGEFTKRAFLNGRVDLTQAEAVMDIIRAKTDKAMNIAVKQLDGSLSDLINNTRQEILNTLAQVEVNIDYPEYDDVEEATTAVVREKTMEFEQLLTKLLRTARRGKILREGISTAIIGRPNVGKSSLLNNLLREDKAIVTDIAGTTRDVIEEYVNINGVPLKLIDTAGIRETDDIVEQIGVERSKKALKEADLVLLVLNASEPLTAQDRQLLEISQDTNRIILLNKTDLPETIETSKLPEDVIRISVLKNQNIDKIEERINNLFFENAGLVEQDATYLSNARHISLIEKAVESLQAVNQGLELGMPVDLLQVDLTRTWEILGEITGDATPDELITQLFSQFCLGK.

(6S)-5-formyl-5,6,7,8-tetrahydrofolate is bound by residues Arg-25, Glu-87, and Arg-126. In terms of domain architecture, TrmE-type G spans 223–377 (GISTAIIGRP…IEERINNLFF (155 aa)). Asn-233 provides a ligand contact to K(+). GTP-binding positions include 233-238 (NVGKSS), 252-258 (TDIAGTT), and 277-280 (DTAG). Ser-237 lines the Mg(2+) pocket. K(+)-binding residues include Thr-252, Ile-254, and Thr-257. Residue Thr-258 coordinates Mg(2+). A (6S)-5-formyl-5,6,7,8-tetrahydrofolate-binding site is contributed by Lys-457.

This sequence belongs to the TRAFAC class TrmE-Era-EngA-EngB-Septin-like GTPase superfamily. TrmE GTPase family. Homodimer. Heterotetramer of two MnmE and two MnmG subunits. K(+) is required as a cofactor.

The protein resides in the cytoplasm. Functionally, exhibits a very high intrinsic GTPase hydrolysis rate. Involved in the addition of a carboxymethylaminomethyl (cmnm) group at the wobble position (U34) of certain tRNAs, forming tRNA-cmnm(5)s(2)U34. The chain is tRNA modification GTPase MnmE from Streptococcus pneumoniae serotype 2 (strain D39 / NCTC 7466).